The following is a 1033-amino-acid chain: Complement receptor type 2 (1033 aa).

The N-terminal stretch at 1–20 (MGAAGLLGVFLALVAPGVLG) is a signal peptide. Sushi domains are found at residues 21 to 84 (ISCG…KCEY), 89 to 148 (SSCP…TCVS), 152 to 212 (LECP…TCEE), 213 to 273 (ARCK…VCEE), 274 to 344 (IFCP…RCEL), 349 to 408 (VQCP…VCEK), 409 to 468 (ECQA…QCKV), 469 to 524 (AACE…LCKE), 525 to 595 (ITCP…LCKL), 600 to 659 (VQCS…VCEK), 660 to 716 (ETCQ…LCKV), 717 to 781 (IHCH…QCLR), 786 to 845 (TRCP…TCIK), 849 to 909 (IGCP…HCKE), and 910 to 970 (VNCS…VCRS). Residues 21 to 971 (ISCGSPPPIL…NPPLAVCRSR (951 aa)) are Extracellular-facing. Intrachain disulfides connect cysteine 23–cysteine 65, cysteine 51–cysteine 82, cysteine 91–cysteine 132, cysteine 118–cysteine 146, cysteine 154–cysteine 197, cysteine 183–cysteine 210, cysteine 215–cysteine 256, cysteine 242–cysteine 271, cysteine 276–cysteine 325, cysteine 305–cysteine 342, cysteine 351–cysteine 393, cysteine 379–cysteine 406, cysteine 410–cysteine 453, cysteine 439–cysteine 466, cysteine 471–cysteine 509, cysteine 495–cysteine 522, cysteine 527–cysteine 576, cysteine 556–cysteine 593, cysteine 602–cysteine 644, cysteine 630–cysteine 657, cysteine 662–cysteine 699, cysteine 685–cysteine 714, cysteine 719–cysteine 762, cysteine 748–cysteine 779, cysteine 788–cysteine 830, cysteine 816–cysteine 843, cysteine 851–cysteine 894, and cysteine 880–cysteine 907. 2 N-linked (GlcNAc...) asparagine glycosylation sites follow: asparagine 121 and asparagine 127. An N-linked (GlcNAc...) asparagine glycan is attached at asparagine 294. A glycan (N-linked (GlcNAc...) asparagine) is linked at asparagine 372. The N-linked (GlcNAc...) asparagine glycan is linked to asparagine 492. The N-linked (GlcNAc...) asparagine glycan is linked to asparagine 623. N-linked (GlcNAc...) asparagine glycosylation occurs at asparagine 682. 3 N-linked (GlcNAc...) asparagine glycosylation sites follow: asparagine 800, asparagine 823, and asparagine 861. A glycan (N-linked (GlcNAc...) asparagine) is linked at asparagine 911. 2 cysteine pairs are disulfide-bonded: cysteine 912–cysteine 955 and cysteine 941–cysteine 968. Residues 972 to 999 (SLAPVLCGIAAGLILLTFLIVITLYVIS) form a helical membrane-spanning segment. Residues 1000–1033 (KHRARNYYTDTSQKEAFHLEAREVYSVDPYNPAS) lie on the Cytoplasmic side of the membrane.

This sequence belongs to the receptors of complement activation (RCA) family. Interacts (via Sushi domain 1 and 2) with C3. Interacts with CD19. Part of a complex composed of CD19, CR2/CD21, CD81 and IFITM1/CD225 in the membrane of mature B-cells. Interacts (via Sushi domain 1 and 2) with FCER2 (via the C-terminus). Interacts with CD23. Interacts with FCRL5. Interacts with CR1. Interacts with INFNA1. In terms of assembly, (Microbial infection) Interacts with Epstein-Barr virus gp350 protein. In terms of tissue distribution, mature B-lymphocytes, T-lymphocytes, pharyngeal epithelial cells, astrocytes and follicular dendritic cells of the spleen.

The protein resides in the cell membrane. In terms of biological role, serves as a receptor for various ligands including complement component CD3d, HNRNPU OR IFNA1. When C3d is bound to antigens, attaches to C3d on B-cell surface and thereby facilitates the recognition and uptake of antigens by B-cells. This interaction enhances B-cell activation and subsequent immune responses. Forms a complex with several partners on the surface of B-cells including CD19, FCRL5 and CD81, to form the B-cell coreceptor complex that plays a crucial role in B-cell activation and signaling. Also induces specific intracellular signaling separately from the BCR and CD19 by activating the tyrosine kinase SRC, which then phosphorylates nucleolin/NCL and triggers AKT and GSK3 kinase activities in a SYK/CD19-independent manner. Acts as a ligand for CD23 (FcepsilonRII), a low-affinity receptor for IgE, which is expressed on B-cells and other immune cells, and thus participates in the regulation of IgE production. (Microbial infection) Acts as a receptor for Epstein-Barr virus. The polypeptide is Complement receptor type 2 (CR2) (Homo sapiens (Human)).